Consider the following 1470-residue polypeptide: RNA-directed RNA polymerase VP1 (1470 aa).

Residues 28-55 (AKQDQKENETTSNNKDTSSSVPKPSNFR) form a disordered region. Positions 37–50 (TTSNNKDTSSSVPK) are enriched in polar residues.

The catalysed reaction is RNA(n) + a ribonucleoside 5'-triphosphate = RNA(n+1) + diphosphate. RNA-directed RNA polymerase that is involved in transcription and genome replication. Following infection, it catalyzes the synthesis of fully conservative plus strands. After core assembly, which consists in recruitment of one capped plus-strand for each genomic segments and polymerase complexes, the polymerase switches mode and catalyzes the synthesis of complementary minus-strands. This Saccharum officinarum (Sugarcane) protein is RNA-directed RNA polymerase VP1 (S1).